The sequence spans 1226 residues: Probable DNA-binding protein SNT1 (1226 aa).

2 disordered regions span residues 1-219 and 264-331; these read MGYP…YSRS and LKST…PDNI. Residues 11–27 show a composition bias toward basic residues; that stretch reads GDKKRYHYSNNPNRRHP. Over residues 31-64 the composition is skewed to polar residues; sequence YSKNSFPKSSNNGFVSSPTADNSTNPSVTPSTAS. 2 stretches are compositionally biased toward low complexity: residues 81–103 and 116–131; these read PRPS…SSTR and SSST…NTST. Composition is skewed to polar residues over residues 132 to 143 and 150 to 170; these read ITHTNTDIGNSR and SRYN…SALS. Ser-187 bears the Phosphoserine mark. Low complexity predominate over residues 202 to 211; sequence NNVSSVNNNS. Positions 264–275 are enriched in polar residues; sequence LKSTHSQSSPSL. Basic and acidic residues predominate over residues 280–304; the sequence is FHDANKLDKPEASVKVETPSKDETK. Residue Ser-395 is modified to Phosphoserine. Positions 539–591 form a coiled coil; sequence DLQKKYEKECEILTKLSENLRKEEIENKRKEHELMEQKRREEGIETEKEKSLR. The span at 569–590 shows a compositional bias: basic and acidic residues; the sequence is EHELMEQKRREEGIETEKEKSL. Positions 569–605 are disordered; that stretch reads EHELMEQKRREEGIETEKEKSLRHPSSSSSSRRRNRA. An SANT domain is found at 668 to 720; that stretch reads DASDNFTDHEHSLFLEGYLIHPKKFGKISHYMGGLRSPEECVLHYYRTKKTVN. The span at 732–745 shows a compositional bias: basic residues; the sequence is RKMSAAAKRRKRKE. The disordered stretch occupies residues 732-796; the sequence is RKMSAAAKRR…SEVKGDPLGT (65 aa). The segment covering 748–758 has biased composition (acidic residues); the sequence is NDEEVEVDESK. Over residues 759–773 the composition is skewed to basic and acidic residues; it reads EESTNTIEKEEKSEN. At Thr-796 the chain carries Phosphothreonine. Positions 884-938 constitute an HTH myb-type domain; the sequence is APEHKTSYWSVRESQLFPELLKEFGSQWSLISEKLGTKSTTMVRNYYQRNAARNG. The H-T-H motif DNA-binding region spans 911 to 934; sequence WSLISEKLGTKSTTMVRNYYQRNA. Ser-1037 is subject to Phosphoserine. Residues 1172-1194 are disordered; it reads SQGTPTFPLPAPRTSPISRAPPK.

As to quaternary structure, identified in a Set3C complex with SET3, HST1, HOS2, SIF2, CPR1 and HOS4.

The protein localises to the nucleus. Functionally, part of the Set3C complex, which is required to repress early/middle sporulation genes during meiosis. The polypeptide is Probable DNA-binding protein SNT1 (SNT1) (Saccharomyces cerevisiae (strain ATCC 204508 / S288c) (Baker's yeast)).